Consider the following 256-residue polypeptide: Small ribosomal subunit protein eS1 (256 aa).

Over residues 1 to 18 (MAVGKNKRLSKGKKGLKK) the composition is skewed to basic residues. Residues 1 to 20 (MAVGKNKRLSKGKKGLKKKA) are disordered. Position 2 is an N-acetylalanine; partial (alanine 2).

This sequence belongs to the eukaryotic ribosomal protein eS1 family. Component of the small ribosomal subunit. Mature ribosomes consist of a small (40S) and a large (60S) subunit. The 40S subunit contains about 33 different proteins and 1 molecule of RNA (18S). The 60S subunit contains about 49 different proteins and 3 molecules of RNA (25S, 5.8S and 5S).

The protein resides in the cytoplasm. The chain is Small ribosomal subunit protein eS1 from Chaetomium globosum (strain ATCC 6205 / CBS 148.51 / DSM 1962 / NBRC 6347 / NRRL 1970) (Soil fungus).